Here is a 206-residue protein sequence, read N- to C-terminus: Superoxide dismutase [Mn] (206 aa).

Mn(2+) is bound by residues His27, His82, Asp168, and His172.

This sequence belongs to the iron/manganese superoxide dismutase family. As to quaternary structure, homodimer. The cofactor is Mn(2+).

The catalysed reaction is 2 superoxide + 2 H(+) = H2O2 + O2. In terms of biological role, destroys superoxide anion radicals which are normally produced within the cells and which are toxic to biological systems. The polypeptide is Superoxide dismutase [Mn] (sodA) (Salmonella typhi).